The primary structure comprises 279 residues: 3-methyl-2-oxobutanoate hydroxymethyltransferase (279 aa).

Residues Asp-49 and Asp-88 each contribute to the Mg(2+) site. 3-methyl-2-oxobutanoate is bound by residues 49–50, Asp-88, and Lys-118; that span reads DS. Residue Glu-120 participates in Mg(2+) binding. Glu-187 acts as the Proton acceptor in catalysis.

Belongs to the PanB family. As to quaternary structure, homodecamer; pentamer of dimers. Mg(2+) is required as a cofactor.

Its subcellular location is the cytoplasm. It catalyses the reaction 3-methyl-2-oxobutanoate + (6R)-5,10-methylene-5,6,7,8-tetrahydrofolate + H2O = 2-dehydropantoate + (6S)-5,6,7,8-tetrahydrofolate. It participates in cofactor biosynthesis; (R)-pantothenate biosynthesis; (R)-pantoate from 3-methyl-2-oxobutanoate: step 1/2. In terms of biological role, catalyzes the reversible reaction in which hydroxymethyl group from 5,10-methylenetetrahydrofolate is transferred onto alpha-ketoisovalerate to form ketopantoate. This Agrobacterium fabrum (strain C58 / ATCC 33970) (Agrobacterium tumefaciens (strain C58)) protein is 3-methyl-2-oxobutanoate hydroxymethyltransferase.